We begin with the raw amino-acid sequence, 313 residues long: Ribosomal RNA small subunit methyltransferase H (313 aa).

Residues 35-37 (GGH), Asp55, Phe79, Asp101, and Gln108 each bind S-adenosyl-L-methionine.

It belongs to the methyltransferase superfamily. RsmH family.

Its subcellular location is the cytoplasm. The catalysed reaction is cytidine(1402) in 16S rRNA + S-adenosyl-L-methionine = N(4)-methylcytidine(1402) in 16S rRNA + S-adenosyl-L-homocysteine + H(+). Specifically methylates the N4 position of cytidine in position 1402 (C1402) of 16S rRNA. The sequence is that of Ribosomal RNA small subunit methyltransferase H from Edwardsiella ictaluri (strain 93-146).